The sequence spans 312 residues: Malate dehydrogenase (312 aa).

Residues 7–13 (GAAGGIG) and Asp34 each bind NAD(+). Positions 81 and 87 each coordinate substrate. NAD(+) is bound by residues Asn94 and 117-119 (ITN). The substrate site is built by Asn119 and Arg153. The active-site Proton acceptor is His177. Met227 provides a ligand contact to NAD(+).

Belongs to the LDH/MDH superfamily. MDH type 1 family. As to quaternary structure, homodimer.

It carries out the reaction (S)-malate + NAD(+) = oxaloacetate + NADH + H(+). Functionally, catalyzes the reversible oxidation of malate to oxaloacetate. The polypeptide is Malate dehydrogenase (Enterobacter sp. (strain 638)).